Reading from the N-terminus, the 137-residue chain is Small ribosomal subunit protein bS6 (137 aa).

The interval 104–137 (SLVNKANNKPEPKPTKAKKEDVAPEAKEQAQTEA) is disordered. Residues 111–137 (NKPEPKPTKAKKEDVAPEAKEQAQTEA) show a composition bias toward basic and acidic residues.

This sequence belongs to the bacterial ribosomal protein bS6 family.

Functionally, binds together with bS18 to 16S ribosomal RNA. The sequence is that of Small ribosomal subunit protein bS6 from Helicobacter hepaticus (strain ATCC 51449 / 3B1).